Reading from the N-terminus, the 315-residue chain is uncharacterized protein (315 aa).

Coiled-coil stretches lie at residues 184–212 (AGEE…TPEQ) and 238–275 (EEHR…YKEK).

It belongs to the IIV-6 287R family.

This is an uncharacterized protein from Acheta domesticus (House cricket).